The following is a 368-amino-acid chain: Cytoskeleton protein RodZ (368 aa).

Residues 1 to 111 (MNTEASQDQT…LGKKHKKRDG (111 aa)) are Cytoplasmic-facing. An HTH cro/C1-type domain is found at 19–79 (LRQARESLGL…KLVHLPEDEL (61 aa)). A DNA-binding region (H-T-H motif) is located at residues 30-49 (QQTVAERLCLKVSTIRDIEE). A helical; Signal-anchor for type II membrane protein membrane pass occupies residues 112 to 132 (WLMSFTWLIVLVVLGLTGAWW). At 133-368 (WQNHQAQQAE…RVARLTVGVE (236 aa)) the chain is on the periplasmic side. Residues 151–243 (SAQLSQNGGQ…STEPVDTANT (93 aa)) are disordered. The span at 193 to 221 (STSAVTNSATTSSATTSSVPTTSSVPKTT) shows a compositional bias: low complexity. Polar residues predominate over residues 229–243 (VPKTNSTEPVDTANT).

The protein belongs to the RodZ family.

It localises to the cell inner membrane. In terms of biological role, cytoskeletal protein that is involved in cell-shape control through regulation of the length of the long axis. This is Cytoskeleton protein RodZ from Yersinia pseudotuberculosis serotype O:3 (strain YPIII).